The sequence spans 144 residues: MLMPKRVKYRKPHRPGTQGKATRGNEVTFGDYGLQALEPAWITSRQIEASRIAMTRYIKRGGKVWIKIFPDTPITAKPAETRMGSGKGAPEYWVAVVKPGRILFEMAGVSEEVAREAMRLAAHKLPIKTKFVKRTGLGGDANEG.

Basic residues predominate over residues 1–14 (MLMPKRVKYRKPHR). A disordered region spans residues 1-25 (MLMPKRVKYRKPHRPGTQGKATRGN).

It belongs to the universal ribosomal protein uL16 family. In terms of assembly, part of the 50S ribosomal subunit.

Its function is as follows. Binds 23S rRNA and is also seen to make contacts with the A and possibly P site tRNAs. The protein is Large ribosomal subunit protein uL16 of Moorella thermoacetica (strain ATCC 39073 / JCM 9320).